The sequence spans 734 residues: Photosystem I P700 chlorophyll a apoprotein A2 (734 aa).

Transmembrane regions (helical) follow at residues 46–69 (IFAS…FHVA), 135–158 (LYTG…LHLQ), 175–199 (LNHH…HVAI), 273–291 (IAHH…GHMY), 330–353 (LHFQ…QHMY), 369–395 (AALY…ILVI), 417–439 (AIIS…LYVH), and 517–535 (FLVH…LILV). [4Fe-4S] cluster is bound by residues cysteine 559 and cysteine 568. Helical transmembrane passes span 575 to 596 (AFYL…YWHW) and 643 to 665 (LSVW…MFLI). Histidine 654, methionine 662, and tyrosine 670 together coordinate chlorophyll a. Residue tryptophan 671 coordinates phylloquinone. A helical transmembrane segment spans residues 707–727 (LVGLAHFSVGYIFTYAAFLIA).

It belongs to the PsaA/PsaB family. As to quaternary structure, the PsaA/B heterodimer binds the P700 chlorophyll special pair and subsequent electron acceptors. PSI consists of a core antenna complex that captures photons, and an electron transfer chain that converts photonic excitation into a charge separation. The eukaryotic PSI reaction center is composed of at least 11 subunits. The cofactor is P700 is a chlorophyll a/chlorophyll a' dimer, A0 is one or more chlorophyll a, A1 is one or both phylloquinones and FX is a shared 4Fe-4S iron-sulfur center..

Its subcellular location is the plastid. It is found in the chloroplast thylakoid membrane. The enzyme catalyses reduced [plastocyanin] + hnu + oxidized [2Fe-2S]-[ferredoxin] = oxidized [plastocyanin] + reduced [2Fe-2S]-[ferredoxin]. Functionally, psaA and PsaB bind P700, the primary electron donor of photosystem I (PSI), as well as the electron acceptors A0, A1 and FX. PSI is a plastocyanin-ferredoxin oxidoreductase, converting photonic excitation into a charge separation, which transfers an electron from the donor P700 chlorophyll pair to the spectroscopically characterized acceptors A0, A1, FX, FA and FB in turn. Oxidized P700 is reduced on the lumenal side of the thylakoid membrane by plastocyanin. The sequence is that of Photosystem I P700 chlorophyll a apoprotein A2 from Atropa belladonna (Belladonna).